A 681-amino-acid chain; its full sequence is Rabphilin-3A (681 aa).

Residues Met-1 to Asp-21 form a disordered region. One can recognise a RabBD domain in the interval Gln-40 to Gly-157. The FYVE-type zinc finger occupies Gly-88–Glu-145. Positions 94, 97, 111, 114, 119, 122, 137, and 140 each coordinate Zn(2+). The interval Val-162 to Asp-375 is disordered. The segment covering Ala-199–Pro-208 has biased composition (basic and acidic residues). Omega-N-methylarginine is present on Arg-223. Residues Arg-243–His-252 show a composition bias toward basic and acidic residues. Residue Ser-271 is modified to Phosphoserine. Pro residues predominate over residues Ala-278–Pro-296. Low complexity predominate over residues Ala-347–Ala-356. Positions Ala-362–Asp-375 are enriched in acidic residues. One can recognise a C2 1 domain in the interval Thr-379–Ile-501. 14 residues coordinate Ca(2+): Met-409, Asp-410, Asp-416, Asp-471, Glu-472, Asp-473, Glu-479, Glu-526, Asp-568, Asp-574, Asp-628, Tyr-629, Asp-630, and Asp-636. The region spanning Glu-537 to His-670 is the C2 2 domain. Residues Ser-679 and Ser-680 each carry the phosphoserine modification.

Interacts with RAB3B, RAB3C, RAB3D, RAB8A, RAB27A and RAB27B. Interacts with RAB3A; this interaction recruits RPH3A to synaptic vesicules. Interacts (via C2B domain) with SNAP25. Interacts with deubiquitinating enzyme CAND1; this interaction results in the deubiquitination of RPH3A. Interacts with GRIN2A and DLG4; this ternary complex regulates NMDA receptor composition at postsynaptic membranes. Interacts with SNCA. Ca(2+) is required as a cofactor. In terms of processing, ubiquitinated. Deubiquitinated by CAND1 to prevent its degradation. In terms of tissue distribution, specifically expressed in brain.

The protein localises to the cytoplasmic vesicle. It localises to the secretory vesicle. It is found in the synaptic vesicle membrane. Its subcellular location is the cell projection. The protein resides in the dendritic spine. The protein localises to the postsynaptic cell membrane. It localises to the membrane. Functionally, plays an essential role in docking and fusion steps of regulated exocytosis. At the presynaptic level, RPH3A is recruited by RAB3A to the synaptic vesicle membrane in a GTP-dependent manner where it modulates synaptic vesicle trafficking and calcium-triggered neurotransmitter release. In the post-synaptic compartment, forms a ternary complex with GRIN2A and DLG4 and regulates NMDA receptor stability. Also plays a role in the exocytosis of arginine vasopressin hormone. The chain is Rabphilin-3A (Rph3a) from Mus musculus (Mouse).